The primary structure comprises 113 residues: Cell cycle protein GpsB (113 aa).

Residues 36–68 are a coiled coil; that stretch reads LDMVIKDYSTFTQEIEALQAENIRLVQELDNAP.

It belongs to the GpsB family. In terms of assembly, forms polymers through the coiled coil domains. Interacts with PBP1, MreC and EzrA.

The protein localises to the cytoplasm. Functionally, divisome component that associates with the complex late in its assembly, after the Z-ring is formed, and is dependent on DivIC and PBP2B for its recruitment to the divisome. Together with EzrA, is a key component of the system that regulates PBP1 localization during cell cycle progression. Its main role could be the removal of PBP1 from the cell pole after pole maturation is completed. Also contributes to the recruitment of PBP1 to the division complex. Not essential for septum formation. The sequence is that of Cell cycle protein GpsB from Listeria innocua serovar 6a (strain ATCC BAA-680 / CLIP 11262).